The primary structure comprises 425 residues: COP9 signalosome complex subunit 1 (425 aa).

The region spanning 219 to 379 (ASSGVPPEIY…KSKALQTLEN (161 aa)) is the PCI domain.

This sequence belongs to the CSN1 family. In terms of assembly, component of the COP9 signalosome (CSN) complex.

The protein resides in the cytoplasm. It localises to the nucleus. In terms of biological role, component of the COP9 signalosome (CSN) complex that acts as an regulator of the ubiquitin (Ubl) conjugation pathway by mediating the deneddylation of the cullin subunit of SCF-type E3 ubiquitin-protein ligase complexes. The CSN complex is involved in the regulation of the circadian clock through its control of the stability of the SCF(FWD-1) complex. The polypeptide is COP9 signalosome complex subunit 1 (csn-1) (Neurospora crassa (strain ATCC 24698 / 74-OR23-1A / CBS 708.71 / DSM 1257 / FGSC 987)).